Reading from the N-terminus, the 254-residue chain is Small ribosomal subunit protein uS2 (254 aa).

Residues 225 to 254 (ALSERKREKDDAKLKEDEESKKASDKAEIQ) are disordered. The span at 226–254 (LSERKREKDDAKLKEDEESKKASDKAEIQ) shows a compositional bias: basic and acidic residues.

This sequence belongs to the universal ribosomal protein uS2 family.

The sequence is that of Small ribosomal subunit protein uS2 from Cytophaga hutchinsonii (strain ATCC 33406 / DSM 1761 / CIP 103989 / NBRC 15051 / NCIMB 9469 / D465).